The chain runs to 406 residues: Ribulose bisphosphate carboxylase large chain (406 aa).

Substrate-binding residues include N101 and T151. The active-site Proton acceptor is K153. K155 is a binding site for substrate. The Mg(2+) site is built by K179, D181, and E182. N6-carboxylysine is present on K179. The active-site Proton acceptor is the H272. Positions 273, 305, and 357 each coordinate substrate.

The protein belongs to the RuBisCO large chain family. Type I subfamily. In terms of assembly, heterohexadecamer of 8 large chains and 8 small chains; disulfide-linked. The disulfide link is formed within the large subunit homodimers. Requires Mg(2+) as cofactor. The disulfide bond which can form in the large chain dimeric partners within the hexadecamer appears to be associated with oxidative stress and protein turnover.

It is found in the plastid. It localises to the chloroplast. The catalysed reaction is 2 (2R)-3-phosphoglycerate + 2 H(+) = D-ribulose 1,5-bisphosphate + CO2 + H2O. It catalyses the reaction D-ribulose 1,5-bisphosphate + O2 = 2-phosphoglycolate + (2R)-3-phosphoglycerate + 2 H(+). In terms of biological role, ruBisCO catalyzes two reactions: the carboxylation of D-ribulose 1,5-bisphosphate, the primary event in carbon dioxide fixation, as well as the oxidative fragmentation of the pentose substrate in the photorespiration process. Both reactions occur simultaneously and in competition at the same active site. This is Ribulose bisphosphate carboxylase large chain (rbcL) from Trichomanes striatum (Fern).